The primary structure comprises 332 residues: D-alanine--D-alanine ligase (332 aa).

One can recognise an ATP-grasp domain in the interval 124 to 329 (KMWFSALNIP…FPDYLLSNIN (206 aa)). 154 to 209 (ALVNWGSIFVKAASQGSSVGCYRIDNQEDVASTLAQAFTYSDYVIVEKTISARELE) serves as a coordination point for ATP. Mg(2+) contacts are provided by aspartate 283, glutamate 296, and asparagine 298.

Belongs to the D-alanine--D-alanine ligase family. The cofactor is Mg(2+). Mn(2+) serves as cofactor.

The protein localises to the cytoplasm. It catalyses the reaction 2 D-alanine + ATP = D-alanyl-D-alanine + ADP + phosphate + H(+). The protein operates within cell wall biogenesis; peptidoglycan biosynthesis. In terms of biological role, cell wall formation. In Shewanella piezotolerans (strain WP3 / JCM 13877), this protein is D-alanine--D-alanine ligase.